Here is a 337-residue protein sequence, read N- to C-terminus: Cytidine deaminase 2 (337 aa).

CMP/dCMP-type deaminase domains are found at residues 43-164 (TDPI…FSSL) and 199-320 (LDCS…LKYL). 84-86 (NVD) is a binding site for substrate. Position 97 (His97) interacts with Zn(2+). The Proton donor role is filled by Glu99. Residues Cys132 and Cys135 each coordinate Zn(2+).

Belongs to the cytidine and deoxycytidylate deaminase family. Homodimer. Zn(2+) is required as a cofactor.

The catalysed reaction is cytidine + H2O + H(+) = uridine + NH4(+). It catalyses the reaction 2'-deoxycytidine + H2O + H(+) = 2'-deoxyuridine + NH4(+). This enzyme scavenges exogenous and endogenous cytidine and 2'-deoxycytidine for UMP synthesis. This chain is Cytidine deaminase 2 (CDA2), found in Arabidopsis thaliana (Mouse-ear cress).